Consider the following 303-residue polypeptide: UDP-3-O-acyl-N-acetylglucosamine deacetylase (303 aa).

Positions 78, 237, and 241 each coordinate Zn(2+). The active-site Proton donor is His-264.

It belongs to the LpxC family. Zn(2+) serves as cofactor.

The enzyme catalyses a UDP-3-O-[(3R)-3-hydroxyacyl]-N-acetyl-alpha-D-glucosamine + H2O = a UDP-3-O-[(3R)-3-hydroxyacyl]-alpha-D-glucosamine + acetate. Its pathway is glycolipid biosynthesis; lipid IV(A) biosynthesis; lipid IV(A) from (3R)-3-hydroxytetradecanoyl-[acyl-carrier-protein] and UDP-N-acetyl-alpha-D-glucosamine: step 2/6. In terms of biological role, catalyzes the hydrolysis of UDP-3-O-myristoyl-N-acetylglucosamine to form UDP-3-O-myristoylglucosamine and acetate, the committed step in lipid A biosynthesis. The sequence is that of UDP-3-O-acyl-N-acetylglucosamine deacetylase from Saccharophagus degradans (strain 2-40 / ATCC 43961 / DSM 17024).